The following is a 615-amino-acid chain: Melanopsin-B (615 aa).

The Extracellular segment spans residues 1–19 (MDMDRGFYRKVDVPDHAHY). A helical transmembrane segment spans residues 20 to 40 (VIAFFVLIIGVVGVTGNALVM). At 41-56 (YAFLCNKKLRTPPNYF) the chain is on the cytoplasmic side. Residues 57–77 (IMNLAVSDFLMAITQSPIFFI) form a helical membrane-spanning segment. The Extracellular segment spans residues 78-93 (NSLFKEWIFGETGCRM). Cys-91 and Cys-169 form a disulfide bridge. Residues 94 to 114 (YAFCGALFGITSMINLLAISL) form a helical membrane-spanning segment. Topologically, residues 115-136 (DRYIVITKPPQAIRWVSGRRTM) are cytoplasmic. The helical transmembrane segment at 137–157 (VVILLVWLYSLAWSLAPLLGW) threads the bilayer. Over 158 to 189 (SSYIPEGLMTSCTWDYVTSTPANKGYTLMLCC) the chain is Extracellular. Residues 190-210 (FVFFIPLGIISYCYLCMFLAI) form a helical membrane-spanning segment. Topologically, residues 211-244 (RSAGREIERLGTQVRKSTLMQQQTIKTEWKLTKV) are cytoplasmic. The helical transmembrane segment at 245–265 (AFVVIIVYVHSWSPYACVTLI) threads the bilayer. Residues 266–279 (AWAGYGSHLSPYSK) lie on the Extracellular side of the membrane. The chain crosses the membrane as a helical span at residues 280–300 (AVPAVIAKASAIYNPFIYAII). N6-(retinylidene)lysine is present on Lys-287. Residues 301-615 (HSKYRDTLAE…RNLEESFMAL (315 aa)) lie on the Cytoplasmic side of the membrane. 2 disordered regions span residues 390–420 (LGRS…TVAD) and 465–502 (NKHP…QNHP). Positions 401–415 (AQQNRQTRSSDTLEQ) are enriched in polar residues. The segment covering 469 to 478 (NNNHKNHNNR) has biased composition (basic residues).

The protein belongs to the G-protein coupled receptor 1 family. Opsin subfamily. Expressed in the inner nuclear layer of the retina, possibly in amacrine and ganglion cells. Expressed in a subpopulation of neurons in the dorsal habenula.

It is found in the cell membrane. In terms of biological role, photoreceptor implicated in non-image-forming responses to light. This chain is Melanopsin-B (opn4b), found in Gadus morhua (Atlantic cod).